The primary structure comprises 1064 residues: Probable ATP-dependent DNA helicase CHR23 (1064 aa).

A Helicase ATP-binding domain is found at 398-563; that stretch reads VSLYNNDYNG…WSLLNFLLPH (166 aa). 411 to 418 contacts ATP; that stretch reads DEMGLGKT. The short motif at 513–516 is the DEAH box element; sequence DEGH. In terms of domain architecture, Helicase C-terminal spans 699–866; it reads LLDRLLPKLK…DRREMLEEIM (168 aa). Disordered stretches follow at residues 924–955 and 967–1064; these read AYTS…AVYS and MESE…SKRN. A compositionally biased stretch (acidic residues) spans 1002–1014; it reads ESDEEKEEEEEER. The span at 1048 to 1064 shows a compositional bias: low complexity; that stretch reads SSPNSRGKGSSKGSKRN.

Belongs to the helicase family. As to expression, expressed in embryos, root apical meristem (RAM) and shoot apical meristem (SAM).

The protein localises to the nucleus. It catalyses the reaction ATP + H2O = ADP + phosphate + H(+). Probable chromatin-remodeling factor that is functionally redundant with CHR12 in root and shoot stem cell initiation and root apical meristem (RAM) and shoot apical meristem (SAM) maintenance. Can associate with the promoter region of WOX5. May promote seed maturation and repress initiation of germination. May repress plant growth. This Arabidopsis thaliana (Mouse-ear cress) protein is Probable ATP-dependent DNA helicase CHR23.